Consider the following 126-residue polypeptide: Large ribosomal subunit protein bL12 (126 aa).

This sequence belongs to the bacterial ribosomal protein bL12 family. Homodimer. Part of the ribosomal stalk of the 50S ribosomal subunit. Forms a multimeric L10(L12)X complex, where L10 forms an elongated spine to which 2 to 4 L12 dimers bind in a sequential fashion. Binds GTP-bound translation factors.

Its function is as follows. Forms part of the ribosomal stalk which helps the ribosome interact with GTP-bound translation factors. Is thus essential for accurate translation. The sequence is that of Large ribosomal subunit protein bL12 from Beijerinckia indica subsp. indica (strain ATCC 9039 / DSM 1715 / NCIMB 8712).